The chain runs to 253 residues: Triosephosphate isomerase (253 aa).

Residue 9–11 coordinates substrate; the sequence is NWK. The active-site Electrophile is the histidine 95. Catalysis depends on glutamate 167, which acts as the Proton acceptor. Substrate-binding positions include glycine 173, serine 213, and 234-235; that span reads GG. Serine 213 is subject to Phosphoserine.

It belongs to the triosephosphate isomerase family. Homodimer.

It is found in the cytoplasm. It carries out the reaction D-glyceraldehyde 3-phosphate = dihydroxyacetone phosphate. It functions in the pathway carbohydrate biosynthesis; gluconeogenesis. Its pathway is carbohydrate degradation; glycolysis; D-glyceraldehyde 3-phosphate from glycerone phosphate: step 1/1. Functionally, involved in the gluconeogenesis. Catalyzes stereospecifically the conversion of dihydroxyacetone phosphate (DHAP) to D-glyceraldehyde-3-phosphate (G3P). This chain is Triosephosphate isomerase, found in Geobacillus thermodenitrificans (strain NG80-2).